The following is a 91-amino-acid chain: MLFRLFTIPSIALGVLGSAATLPPREESANCRSVCCDAIVPSIFPSGRVGINCHWDELLDCGFSGQVDSCCEAIVPFGVKDGTGIRCSRRQ.

An N-terminal signal peptide occupies residues 1–17 (MLFRLFTIPSIALGVLG). Cystine bridges form between C31–C70, C35–C61, C36–C53, and C71–C87.

The protein belongs to the fungal hydrophobin family. As to quaternary structure, self-assembles to form functional amyloid fibrils called rodlets. Self-assembly into fibrillar rodlets occurs spontaneously at hydrophobic:hydrophilic interfaces and the rodlets further associate laterally to form amphipathic monolayers. As to expression, expressed in conidia.

It is found in the secreted. The protein resides in the cell wall. Aerial growth, conidiation, and dispersal of filamentous fungi in the environment rely upon a capability of their secreting small amphipathic proteins called hydrophobins (HPBs) with low sequence identity. Class I can self-assemble into an outermost layer of rodlet bundles on aerial cell surfaces, conferring cellular hydrophobicity that supports fungal growth, development and dispersal; whereas Class II form highly ordered films at water-air interfaces through intermolecular interactions but contribute nothing to the rodlet structure. HYD3 is a class I hydrophobin located on the conidial surface that activates specifically the humoral and cellular immunity of Metarhizium acridum's own host insect, Locusta migratoria manilensis (Meyen) but not that of other non-host insects. Improves the resistance of locusts to both specialist and generalist fungal pathogens (wide host range) when topically applied to the cuticle, but has no effect on the fungal resistance of other insects, including Spodoptera frugiperda and Galleria mellonella. This Metarhizium acridum (strain CQMa 102) protein is Class I hydrophobin 3.